Consider the following 658-residue polypeptide: Vertnin (658 aa).

This sequence belongs to the vertnin family.

The protein localises to the nucleus. Functionally, acts as a transcription factor that regulates development of thoracic vertebrae. The chain is Vertnin (VRTN) from Bos taurus (Bovine).